The sequence spans 308 residues: D-alanine--D-alanine ligase (308 aa).

The region spanning 104-304 (KQALVPHGIP…YAELVERIVE (201 aa)) is the ATP-grasp domain. 131 to 187 (LPRPYVLKPVNEGSSVGVAIVRDDSNYGNPISRDALGPWQQFDRLLAEPFIKGRELT) is a binding site for ATP. Mg(2+) contacts are provided by aspartate 255, glutamate 271, and asparagine 273.

Belongs to the D-alanine--D-alanine ligase family. Requires Mg(2+) as cofactor. Mn(2+) is required as a cofactor.

Its subcellular location is the cytoplasm. It carries out the reaction 2 D-alanine + ATP = D-alanyl-D-alanine + ADP + phosphate + H(+). It functions in the pathway cell wall biogenesis; peptidoglycan biosynthesis. In terms of biological role, cell wall formation. The polypeptide is D-alanine--D-alanine ligase (Sphingopyxis alaskensis (strain DSM 13593 / LMG 18877 / RB2256) (Sphingomonas alaskensis)).